A 194-amino-acid polypeptide reads, in one-letter code: MRQSSQARETTETKIKLNLQLDESTNVSIQTGVGFFDHMLTLFARHGRFGLQVEAEGDVFVDAHHTVEDVGIVLGNCLKEALQNKEGINRYGSAYVPMDESLGFVAIDISGRSYCVFQGELTNPKLGDFDTELTEEFFRAVAHAANITLHARVLYGSNTHHKIEALFKAFGRALREAVEKNANITGVNSTKGML.

It belongs to the imidazoleglycerol-phosphate dehydratase family.

The protein localises to the cytoplasm. The enzyme catalyses D-erythro-1-(imidazol-4-yl)glycerol 3-phosphate = 3-(imidazol-4-yl)-2-oxopropyl phosphate + H2O. It participates in amino-acid biosynthesis; L-histidine biosynthesis; L-histidine from 5-phospho-alpha-D-ribose 1-diphosphate: step 6/9. This is Imidazoleglycerol-phosphate dehydratase from Bacillus cereus (strain ATCC 14579 / DSM 31 / CCUG 7414 / JCM 2152 / NBRC 15305 / NCIMB 9373 / NCTC 2599 / NRRL B-3711).